The sequence spans 560 residues: Leucine-rich repeat and IQ domain-containing protein 4 (560 aa).

Positions 1–20 are disordered; sequence MSKDIKSVEHSPKIHQRNDP. LRR repeat units follow at residues 23–47, 48–70, 72–95, 97–116, 117–140, 141–164, 166–187, 188–210, 212–233, 234–256, 258–281, 283–301, 302–325, 326–348, 350–371, 374–397, 398–422, 424–443, 444–466, and 468–489; these read VNDRTFFIDASNQSLTAIPLEIFTF, TELEEVHLENNQIEEIPQEIQRL, NIRVLYLDKNNLRSLCPALGLLSS, ESLDLSYNPIFSSSLVVVSF, LHALRELRLYQTDLKEIPVVIFKN, LHHLELLGLTGNHLKCLPKEIVNQ, KLREIYLKRNQFEVFPQELCVL, YTLEIIDLDENKIGAIPEEIGHL, GLQKFYMASNNLPVLPASLCQC, SQLSVLDLSHNLLHSIPKSFAEL, KMTEIGLSGNRLEKVPRLICRWTS, HLLYLGNTGLHRLRGSFRC, LVNLRFLDLSQNHLHHCPLQICAL, KNLEVLGLDDNKIGQLPSELGSL, KLKILGLTGNEFLSFPEEVLSL, LEKLYIGQDQGFKLTYVPEHIRKL, QSLKELYIENNHLEYLPVSLGSMPN, EVLDCRHNLLKQLPDAICQA, QALKELRLEDNLLTHLPENLDSL, and NLKVLTLMDNPMEEPPKEVCAE. Residues 504–533 form the IQ domain; it reads RNIMATKIQAWWRGTMVQRGFGKFGELLKP. A disordered region spans residues 529-560; it reads ELLKPQKKGKTSPKDKKGKKDVKGKPGKGKKK. Residues 533-560 show a composition bias toward basic residues; the sequence is PQKKGKTSPKDKKGKKDVKGKPGKGKKK.

The polypeptide is Leucine-rich repeat and IQ domain-containing protein 4 (LRRIQ4) (Homo sapiens (Human)).